The primary structure comprises 804 residues: E3 UFM1-protein ligase 1 homolog (804 aa).

The residue at position 1 (Met-1) is an N-acetylmethionine. A disordered region spans residues 397–483 (IHPSSKSSES…VKAQESNNII (87 aa)). A compositionally biased stretch (low complexity) spans 400–409 (SSKSSESTES). The span at 463–475 (LDSKAGGKKESVK) shows a compositional bias: basic and acidic residues.

This sequence belongs to the UFL1 family.

E3 UFM1-protein ligase that mediates ufmylation of target proteins. This chain is E3 UFM1-protein ligase 1 homolog, found in Arabidopsis thaliana (Mouse-ear cress).